A 2485-amino-acid chain; its full sequence is Tyrosine-protein phosphatase non-receptor type 13 (2485 aa).

Residues 3–190 (VSLAEALEVR…SGTDQLSCNS (188 aa)) enclose the KIND domain. The disordered stretch occupies residues 186 to 220 (LSCNSEQKPDRSQAIRDRLRGKGLPTGRSSTSDVL). Basic and acidic residues predominate over residues 192-205 (QKPDRSQAIRDRLR). At S240 the chain carries Phosphoserine. The disordered stretch occupies residues 260–283 (SDNSGREDSENTFSPYQFKTSGPE). The segment covering 270–279 (NTFSPYQFKT) has biased composition (polar residues). Phosphoserine is present on residues S301 and S302. Residues 433–467 (RSEASKRFESSSGLPGVDETLSQGQSQRPSRQYET) form a disordered region. The span at 452–465 (TLSQGQSQRPSRQY) shows a compositional bias: polar residues. Positions 469-504 (FEGNLINQEIMLKRQEEELMQLQAKMALRQSRLSLY) form a coiled coil. An FERM domain is found at 572–872 (RKVNIMLLNG…YQHKFQLQMR (301 aa)). 5 positions are modified to phosphoserine: S890, S897, S908, S911, and S914. 2 disordered regions span residues 947–975 (QNSS…DLSQ) and 995–1049 (TVAE…IEDP). The span at 950–971 (SKEKNDKASWEEKPREMSKSYH) shows a compositional bias: basic and acidic residues. Polar residues predominate over residues 1020-1032 (KLNNSKSVASLNR). Phosphoserine is present on residues S1029, S1033, and S1085. A compositionally biased stretch (basic and acidic residues) spans 1033–1042 (SPERRKHESD). The PDZ 1 domain maps to 1093–1178 (LVNLKKDAKY…EDVTLVISQP (86 aa)). Disordered stretches follow at residues 1227-1258 (HISE…SLSQ) and 1273-1362 (TWQE…SPPK). Composition is skewed to polar residues over residues 1243–1258 (SLSS…SLSQ), 1273–1288 (TWQE…SVIS), and 1327–1359 (TYSS…FSSS). PDZ domains are found at residues 1368–1452 (EVEL…LEKG) and 1501–1588 (EVKL…LCRP). The segment covering 1608–1630 (AQVLPNSSKDSSQPSCVEQSTSS) has biased composition (polar residues). Disordered stretches follow at residues 1608-1665 (AQVL…DLVT) and 1715-1751 (PNKP…SSMD). Residues 1736–1749 (QSYQPQSESASSSS) are compositionally biased toward low complexity. PDZ domains follow at residues 1788 to 1868 (LITL…IGRV) and 1882 to 1965 (PDIT…ATRN). The disordered stretch occupies residues 1971–1996 (PSSKRSAVSAPKSTKGNGSYSVGSCS). The segment covering 1973-1996 (SKRSAVSAPKSTKGNGSYSVGSCS) has biased composition (polar residues). Positions 2213–2467 (PSKELENLQE…IFCYQVILYV (255 aa)) constitute a Tyrosine-protein phosphatase domain. Residues D2378, 2408–2414 (CSAGIGR), and Q2452 contribute to the substrate site. The Phosphocysteine intermediate role is filled by C2408. Residues 2408-2414 (CSAGIGR) are substrate.

It belongs to the protein-tyrosine phosphatase family. Non-receptor class subfamily. Interacts (via the first PDZ domain) with PLEKHA1 and PLEKHA2. Interacts (via the second PDZ domain) with TNFRSF6 (Fas receptor) (via C-terminus). Interacts (via the second PDZ domain) with TRIP6 (via the third LIM domain and C-terminus). Interacts (via the third PDZ domain) with NGFR (via C-terminal SVP motif) and PKN2 (via C-terminus). Interacts (via the second or fourth PDZ domains) with PDLIM4 (via C-terminus only or via combined C-terminus and LIM domain, but not LIM domain only). Found in a complex with PDLIM4 and TRIP6. Interacts with PDLIM4; this interaction results in dephosphorylation of SRC 'Tyr-419' by this protein leading to its inactivation. Interacts with BRD7. Interacts with RAPGEF6. Interacts with ARHGAP29. Interacts with PIK3R2; dephosphorylates PIK3R2. Interacts with FBXL2. Interacts (via the FERM domain) with ENTR1. Found in a complex with ENTR1, PTPN13 and GIT1. As to expression, expressed in keratinocytes (at protein level). Present in most tissues with the exception of the liver and skeletal muscle. Most abundant in lung, kidney and fetal brain.

It localises to the cytoplasm. The protein localises to the cytoskeleton. It is found in the nucleus. The protein resides in the cell projection. Its subcellular location is the lamellipodium. The enzyme catalyses O-phospho-L-tyrosyl-[protein] + H2O = L-tyrosyl-[protein] + phosphate. In terms of biological role, tyrosine phosphatase which negatively regulates FAS-induced apoptosis and NGFR-mediated pro-apoptotic signaling. May regulate phosphoinositide 3-kinase (PI3K) signaling through dephosphorylation of PIK3R2. The polypeptide is Tyrosine-protein phosphatase non-receptor type 13 (PTPN13) (Homo sapiens (Human)).